Reading from the N-terminus, the 440-residue chain is Adenylosuccinate lyase (440 aa).

N(6)-(1,2-dicarboxyethyl)-AMP is bound by residues 4 to 5 (RY), 67 to 69 (KHD), and 93 to 94 (TS). His-141 acts as the Proton donor/acceptor in catalysis. Gln-212 lines the N(6)-(1,2-dicarboxyethyl)-AMP pocket. The active-site Proton donor/acceptor is the Ser-262. Residues Ser-263, 268–270 (KRN), Asn-276, and 307–311 (SVERF) contribute to the N(6)-(1,2-dicarboxyethyl)-AMP site.

Belongs to the lyase 1 family. Adenylosuccinate lyase subfamily. In terms of assembly, homotetramer. Residues from neighboring subunits contribute catalytic and substrate-binding residues to each active site.

It carries out the reaction N(6)-(1,2-dicarboxyethyl)-AMP = fumarate + AMP. The enzyme catalyses (2S)-2-[5-amino-1-(5-phospho-beta-D-ribosyl)imidazole-4-carboxamido]succinate = 5-amino-1-(5-phospho-beta-D-ribosyl)imidazole-4-carboxamide + fumarate. Its pathway is purine metabolism; AMP biosynthesis via de novo pathway; AMP from IMP: step 2/2. It participates in purine metabolism; IMP biosynthesis via de novo pathway; 5-amino-1-(5-phospho-D-ribosyl)imidazole-4-carboxamide from 5-amino-1-(5-phospho-D-ribosyl)imidazole-4-carboxylate: step 2/2. In terms of biological role, catalyzes two reactions in de novo purine nucleotide biosynthesis. Catalyzes the breakdown of 5-aminoimidazole- (N-succinylocarboxamide) ribotide (SAICAR or 2-[5-amino-1-(5-phospho-beta-D-ribosyl)imidazole-4-carboxamido]succinate) to 5-aminoimidazole-4-carboxamide ribotide (AICAR or 5-amino-1-(5-phospho-beta-D-ribosyl)imidazole-4-carboxamide) and fumarate, and of adenylosuccinate (ADS or N(6)-(1,2-dicarboxyethyl)-AMP) to adenosine monophosphate (AMP) and fumarate. In Helicobacter pylori (strain J99 / ATCC 700824) (Campylobacter pylori J99), this protein is Adenylosuccinate lyase (purB).